Consider the following 503-residue polypeptide: MKEYKVYLERARSRQQHFLYPLIFREYIYGLAYSHNLNRSIFVENIGYDKKYSLLIVKRLITRMYQQNHLIIWANDSNKNPFWGYKNNYYSQIISEGFAIVVEIPFFLQLSSSLEEEEIIKSYKNLRSIHSIFPFLEDKLTYLNYVSDIRIPYPIHLEILVQILRYWVKDAPFFHFLRLFLWNWNSFITTKKSISTFSKSHRRFFLFLYNFYVCEYESIFVFLRNKSSHLRLKSFSVFFERIFFYAKREHLVKVFAKDFSYTLTFFKDPNIHYVRYQGKCILASKNAPFLMNKWKHFFIHLWQCFFDVWSQPRMININPLSEHSFQLLGYFSNVRLNRSVVRSQMLQNTFLIEIVIKKLDIIVPIIPLIRSLAKAKFCNVLGQPISKPVWADSSDFDIIDRFLGICRNLSHYYNGSSKKKSLYRIKYILRLSCIKTLACKHKSTVRAFLKRSGSEEFLQEFFTEEEEILAFLFPRDSSTLQRLHRNRIWYLDILFSNDLVHDE.

This sequence belongs to the intron maturase 2 family. MatK subfamily.

The protein resides in the plastid. It is found in the chloroplast. Functionally, usually encoded in the trnK tRNA gene intron. Probably assists in splicing its own and other chloroplast group II introns. The chain is Maturase K from Vicia faba (Broad bean).